Reading from the N-terminus, the 787-residue chain is Integrin beta-6 (787 aa).

A signal peptide spans 1-21 (MGIELLCLFFLFLGRNDHVQG). The PSI domain occupies 22–71 (GCAMGGAETCEDCLLIGPQCAWCSQENFTHLSGVGERCDTPANLLAKGCQ). At 22 to 708 (GCAMGGAETC…KDCPKPPNIP (687 aa)) the chain is on the extracellular side. 19 disulfide bridges follow: Cys23–Cys41, Cys31–Cys454, Cys34–Cys59, Cys44–Cys70, Cys197–Cys204, Cys252–Cys293, Cys394–Cys406, Cys426–Cys452, Cys456–Cys476, Cys467–Cys479, Cys481–Cys490, Cys492–Cys519, Cys502–Cys517, Cys511–Cys522, Cys524–Cys537, Cys539–Cys560, Cys544–Cys558, Cys552–Cys563, and Cys565–Cys574. 2 N-linked (GlcNAc...) asparagine glycosylation sites follow: Asn48 and Asn97. The VWFA domain occupies 131–371 (YPVDLYYLMD…QLIISAYEEL (241 aa)). Positions 140, 142, and 144 each coordinate Mg(2+). 4 residues coordinate Ca(2+): Ser144, Asp147, Asp148, and Glu179. Ca(2+) contacts are provided by Asn235, Asp237, Pro239, and Glu240. Glu240 is a binding site for Mg(2+). Asn260 is a glycosylation site (N-linked (GlcNAc...) asparagine). 2 residues coordinate Ca(2+): Asp271 and Lys355. Asn387 carries an N-linked (GlcNAc...) asparagine glycan. Residue Asn418 is glycosylated (N-linked (GlcNAc...) asparagine). I-EGF domains follow at residues 456–491 (CQKEVEVNSSKCSNGNGSFQCGVCACNPGHVGHHCE), 492–538 (CGED…PYCQ), 539–575 (CDNFSCVRHKGLLCGDNGDCDCGECVCRSGWTGEYCN), and 576–615 (CTTSTDPCVSEDGILCSGRGDCVCGKCICTNPGASGPACE). Residues Asn463 and Asn471 are each glycosylated (N-linked (GlcNAc...) asparagine). N-linked (GlcNAc...) asparagine glycosylation occurs at Asn541. Asn575 carries an N-linked (GlcNAc...) asparagine glycan. 9 disulfides stabilise this stretch: Cys576–Cys599, Cys583–Cys597, Cys591–Cys602, Cys604–Cys614, Cys617–Cys620, Cys624–Cys670, Cys630–Cys649, Cys633–Cys645, and Cys678–Cys701. A helical membrane pass occupies residues 709-729 (MIMLGVSLAILLIGVALLCIW). The segment at 730–757 (KLLVSFHDRKEVAKFEAERSKAKWQTGT) is interaction with HAX1. Over 730–787 (KLLVSFHDRKEVAKFEAERSKAKWQTGTNPLYRGSTSTFKNVTYKHKEKQKVDLSTDG) the chain is Cytoplasmic.

The protein belongs to the integrin beta chain family. As to quaternary structure, heterodimer of an alpha and a beta subunit. Interacts with FLNB. Interacts with HAX1. ITGAV:ITGB6 interacts with FBN1. ITGAV:ITGB6 interacts with TGFB1.

The protein resides in the cell membrane. The protein localises to the cell junction. Its subcellular location is the focal adhesion. Functionally, integrin alpha-V:beta-6 (ITGAV:ITGB6) is a receptor for fibronectin and cytotactin. It recognizes the sequence R-G-D in its ligands. ITGAV:ITGB6 acts as a receptor for fibrillin-1 (FBN1) and mediates R-G-D-dependent cell adhesion to FBN1. Integrin alpha-V:beta-6 (ITGAV:ITGB6) mediates R-G-D-dependent release of transforming growth factor beta-1 (TGF-beta-1) from regulatory Latency-associated peptide (LAP), thereby playing a key role in TGF-beta-1 activation. The sequence is that of Integrin beta-6 (ITGB6) from Ovis aries (Sheep).